Reading from the N-terminus, the 418-residue chain is Diaminopimelate decarboxylase (418 aa).

N6-(pyridoxal phosphate)lysine is present on K53. Pyridoxal 5'-phosphate-binding positions include G223 and 264-267 (EPGR). Substrate contacts are provided by R267, R303, and Y307. C338 (proton donor) is an active-site residue. Substrate contacts are provided by E339 and Y374. Y374 contributes to the pyridoxal 5'-phosphate binding site.

This sequence belongs to the Orn/Lys/Arg decarboxylase class-II family. LysA subfamily. Homodimer. Pyridoxal 5'-phosphate serves as cofactor.

The catalysed reaction is meso-2,6-diaminopimelate + H(+) = L-lysine + CO2. Its pathway is amino-acid biosynthesis; L-lysine biosynthesis via DAP pathway; L-lysine from DL-2,6-diaminopimelate: step 1/1. In terms of biological role, specifically catalyzes the decarboxylation of meso-diaminopimelate (meso-DAP) to L-lysine. The chain is Diaminopimelate decarboxylase from Buchnera aphidicola subsp. Baizongia pistaciae (strain Bp).